A 100-amino-acid chain; its full sequence is MIREERLLKVLRAPHVSEKASTAMEKHNTIVLKVAKDATKAEIKAAVHKLFEVEVNDVRTLVVKGKTKRHGQRIGRRSDWKKAYVTLKEGQNLDFIGGAE.

This sequence belongs to the universal ribosomal protein uL23 family. In terms of assembly, part of the 50S ribosomal subunit. Contacts protein L29, and trigger factor when it is bound to the ribosome.

Its function is as follows. One of the early assembly proteins it binds 23S rRNA. One of the proteins that surrounds the polypeptide exit tunnel on the outside of the ribosome. Forms the main docking site for trigger factor binding to the ribosome. This is Large ribosomal subunit protein uL23 from Sodalis glossinidius (strain morsitans).